We begin with the raw amino-acid sequence, 565 residues long: Urease subunit beta (565 aa).

The Urease domain occupies 130-565 (GGIDTHIHFI…LALARKYFMI (436 aa)). 3 residues coordinate Ni(2+): H135, H137, and K218. An N6-carboxylysine modification is found at K218. Residue H220 coordinates substrate. Positions 247 and 273 each coordinate Ni(2+). H321 functions as the Proton donor in the catalytic mechanism. D361 provides a ligand contact to Ni(2+).

The protein belongs to the metallo-dependent hydrolases superfamily. Urease alpha subunit family. Heterohexamer of 3 UreA (alpha) and 3 UreB (beta) subunits. It depends on Ni cation as a cofactor. In terms of processing, carboxylation allows a single lysine to coordinate two nickel ions.

It is found in the cytoplasm. The enzyme catalyses urea + 2 H2O + H(+) = hydrogencarbonate + 2 NH4(+). It functions in the pathway nitrogen metabolism; urea degradation; CO(2) and NH(3) from urea (urease route): step 1/1. The polypeptide is Urease subunit beta (Campylobacter lari).